A 318-amino-acid chain; its full sequence is Methionyl-tRNA formyltransferase (318 aa).

Position 112–115 (112–115 (SILP)) interacts with (6S)-5,6,7,8-tetrahydrofolate.

This sequence belongs to the Fmt family.

The catalysed reaction is L-methionyl-tRNA(fMet) + (6R)-10-formyltetrahydrofolate = N-formyl-L-methionyl-tRNA(fMet) + (6S)-5,6,7,8-tetrahydrofolate + H(+). Attaches a formyl group to the free amino group of methionyl-tRNA(fMet). The formyl group appears to play a dual role in the initiator identity of N-formylmethionyl-tRNA by promoting its recognition by IF2 and preventing the misappropriation of this tRNA by the elongation apparatus. The polypeptide is Methionyl-tRNA formyltransferase (Shewanella sp. (strain MR-7)).